The following is a 272-amino-acid chain: Putative phosphoenolpyruvate synthase regulatory protein (272 aa).

Residue 152–159 (GVSRCGKT) participates in ADP binding.

This sequence belongs to the pyruvate, phosphate/water dikinase regulatory protein family. PSRP subfamily.

It catalyses the reaction [pyruvate, water dikinase] + ADP = [pyruvate, water dikinase]-phosphate + AMP + H(+). The enzyme catalyses [pyruvate, water dikinase]-phosphate + phosphate + H(+) = [pyruvate, water dikinase] + diphosphate. Bifunctional serine/threonine kinase and phosphorylase involved in the regulation of the phosphoenolpyruvate synthase (PEPS) by catalyzing its phosphorylation/dephosphorylation. This is Putative phosphoenolpyruvate synthase regulatory protein from Pseudomonas putida (strain W619).